The primary structure comprises 473 residues: MKTLYSLRRFYHVETLFNGTLALAGRDQETTGFAWWAGNARLINLSGKLLGAHVAHAGLIVFWAGAMNLFEVAHFVPEKPMYEQGLILLPHLATLGWGVGPGGEVLDTFPYFVSGVLHLISSAVLGFGGIYHALLGPETLEESFPFFGYVWKDRNKMTTILGIHLILLGLGAFLLVFKALYFGGVYDTWAPGGGDVRKITNLTLSPSIIFGYLLKSPFGGEGWIVSVDDLEDIVGGHVWLGSICILGGIWHILTKPFAWARRAFVWSGEAYLSYSLGALAIFGFTACCFVWFNNTAYPSEFYGPTGPEASQAQAFTFLVRDQRLGANVGSAQGPTGLGKYLMRSPTGEVIFGGETMRFWDLRAPWLEPLRGPNGLDLSRLKKDIQPWQERRSAEYMTHAPLGSLNSVGGVATEINAVNYVSPRSWLATSHFVLGFFFFVGHLWHAGRARAAAAGFEKGIDRDFEPVLSMTPLN.

Positions 1 to 14 are excised as a propeptide; the sequence is MKTLYSLRRFYHVE. Residue T15 is modified to N-acetylthreonine. T15 carries the post-translational modification Phosphothreonine. The next 5 helical transmembrane spans lie at 69–93, 134–155, 178–200, 255–275, and 291–312; these read LFEVAHFVPEKPMYEQGLILLPHLA, LLGPETLEESFPFFGYVWKDRN, KALYFGGVYDTWAPGGGDVRKIT, KPFAWARRAFVWSGEAYLSYS, and WFNNTAYPSEFYGPTGPEASQA. E367 is a [CaMn4O5] cluster binding site. Residues 447–471 traverse the membrane as a helical segment; it reads RARAAAAGFEKGIDRDFEPVLSMTP.

Belongs to the PsbB/PsbC family. PsbC subfamily. As to quaternary structure, PSII is composed of 1 copy each of membrane proteins PsbA, PsbB, PsbC, PsbD, PsbE, PsbF, PsbH, PsbI, PsbJ, PsbK, PsbL, PsbM, PsbT, PsbX, PsbY, PsbZ, Psb30/Ycf12, at least 3 peripheral proteins of the oxygen-evolving complex and a large number of cofactors. It forms dimeric complexes. The cofactor is Binds multiple chlorophylls and provides some of the ligands for the Ca-4Mn-5O cluster of the oxygen-evolving complex. It may also provide a ligand for a Cl- that is required for oxygen evolution. PSII binds additional chlorophylls, carotenoids and specific lipids..

It is found in the plastid. Its subcellular location is the chloroplast thylakoid membrane. Its function is as follows. One of the components of the core complex of photosystem II (PSII). It binds chlorophyll and helps catalyze the primary light-induced photochemical processes of PSII. PSII is a light-driven water:plastoquinone oxidoreductase, using light energy to abstract electrons from H(2)O, generating O(2) and a proton gradient subsequently used for ATP formation. The chain is Photosystem II CP43 reaction center protein from Ipomoea purpurea (Common morning glory).